Here is a 45-residue protein sequence, read N- to C-terminus: Large ribosomal subunit protein bL34 (45 aa).

The segment at 23 to 45 (ETPGGKKVLSARRAKGRKNLIAK) is disordered. Residues 31–45 (LSARRAKGRKNLIAK) show a composition bias toward basic residues.

It belongs to the bacterial ribosomal protein bL34 family.

This is Large ribosomal subunit protein bL34 from Elusimicrobium minutum (strain Pei191).